Consider the following 534-residue polypeptide: CD276 antigen (534 aa).

The signal sequence occupies residues 1 to 28; the sequence is MLRRRGSPGMGVHVGAALGALWFCLTGA. In terms of domain architecture, Ig-like V-type 1 spans 29 to 139; that stretch reads LEVQVPEDPV…GSAAVSLQVA (111 aa). Topologically, residues 29–466 are extracellular; sequence LEVQVPEDPV…GQPMTFPPEA (438 aa). 4 disulfides stabilise this stretch: Cys50–Cys122, Cys165–Cys220, Cys268–Cys340, and Cys383–Cys438. N-linked (GlcNAc...) asparagine glycosylation is found at Asn104, Asn189, Asn215, Asn322, Asn407, and Asn433. In terms of domain architecture, Ig-like C2-type 1 spans 145–238; sequence PSMTLEPNKD…QDAHSSVTIT (94 aa). An Ig-like V-type 2 domain is found at 243 to 357; it reads PTGAVEVQVP…GSAAVSLQVA (115 aa). Positions 363–456 constitute an Ig-like C2-type 2 domain; it reads PSMTLEPNKD…QDAHGSVTIT (94 aa). Residues 467–487 form a helical membrane-spanning segment; it reads LWVTVGLSVCLIALLVALAFV. Topologically, residues 488–534 are cytoplasmic; the sequence is CWRKIKQSCEEENAGAEDQDGEGEGSKTALQPLKHSDSKEDDGQEIA. The span at 498-510 shows a compositional bias: acidic residues; the sequence is EENAGAEDQDGEG. The disordered stretch occupies residues 498-534; sequence EENAGAEDQDGEGEGSKTALQPLKHSDSKEDDGQEIA. Ser525 bears the Phosphoserine mark.

Belongs to the immunoglobulin superfamily. BTN/MOG family. Interacts with TREML2 and this interaction enhances T-cell activation. In terms of tissue distribution, ubiquitous but not detectable in peripheral blood lymphocytes or granulocytes. Weakly expressed in resting monocytes. Expressed in dendritic cells derived from monocytes. Expressed in epithelial cells of sinonasal tissue. Expressed in extravillous trophoblast cells and Hofbauer cells of the first trimester placenta and term placenta.

It is found in the membrane. Its function is as follows. May participate in the regulation of T-cell-mediated immune response. May play a protective role in tumor cells by inhibiting natural-killer mediated cell lysis as well as a role of marker for detection of neuroblastoma cells. May be involved in the development of acute and chronic transplant rejection and in the regulation of lymphocytic activity at mucosal surfaces. Could also play a key role in providing the placenta and fetus with a suitable immunological environment throughout pregnancy. Both isoform 1 and isoform 2 appear to be redundant in their ability to modulate CD4 T-cell responses. Isoform 2 is shown to enhance the induction of cytotoxic T-cells and selectively stimulates interferon gamma production in the presence of T-cell receptor signaling. This is CD276 antigen (CD276) from Homo sapiens (Human).